The primary structure comprises 141 residues: uncharacterized protein (141 aa).

This is an uncharacterized protein from Homo sapiens (Human).